Reading from the N-terminus, the 568-residue chain is Zinc finger protein 768 (568 aa).

Over residues 1–16 the composition is skewed to basic and acidic residues; the sequence is MEREASSWGLESRDVH. Disordered regions lie at residues 1–223, 228–247, and 264–287; these read MERE…SLGV, SFTQ…FDMP, and LNLT…QGPR. Residues Ser-17, Ser-23, and Ser-27 each carry the phosphoserine modification. The residue at position 35 (Thr-35) is a Phosphothreonine. Phosphoserine is present on residues Ser-36, Ser-65, Ser-72, Ser-79, Ser-86, Ser-93, Ser-100, Ser-107, Ser-114, Ser-121, Ser-128, Ser-135, and Ser-149. The segment covering 62–80 has biased composition (low complexity); the sequence is EPQSPEFEPQSPEFESQSP. A compositionally biased stretch (polar residues) spans 110–122; sequence SDPQSPEFESQSP. Position 152 is a phosphotyrosine (Tyr-152). Residue Ser-154 is modified to Phosphoserine. The segment covering 159–186 has biased composition (polar residues); it reads FESQSPGYESQSPGYEPQNSGDGVQNSE. Position 189 is a phosphothreonine (Thr-189). Ser-191 is modified (phosphoserine). The C2H2-type 1 zinc-finger motif lies at 289 to 311; that stretch reads NICGICGKSFGRGSTLIQHQRIH. Thr-312 is subject to Phosphothreonine. Position 317 is a phosphotyrosine (Tyr-317). 4 consecutive C2H2-type zinc fingers follow at residues 317 to 339, 345 to 367, 373 to 395, and 401 to 423; these read YKCE…QRTH, YKCP…QRTH, and YSCP…QRVH. Phosphoserine is present on residues Ser-323 and Ser-327. Thr-424 carries the phosphothreonine modification. C2H2-type zinc fingers lie at residues 429–451, 457–479, 485–507, 513–535, and 541–563; these read FSCG…ARSH, FKCP…ARTH, YSCP…QRSH, YRCA…HRVH, and YKCD…QRTH. Position 470 is a phosphoserine (Ser-470).

Belongs to the krueppel C2H2-type zinc-finger protein family. In terms of assembly, interacts (via zinc-finger domains) with TP53 (via N-terminus); interaction might be facilitated by TP53 oligomerization state. Interacts with ELP3. In terms of processing, may be phosphorylated at residue 'Ser-5' of the tandem heptapeptide repeats in the N-terminus. Phosphorylation might be increased upon RAS pathway activation and negatively regulate protein stability.

Its subcellular location is the nucleus. The protein resides in the chromosome. Binds to mammalian-wide interspersed repeat (MIRs) sequences in euchromatin and promoter regions of genes at the consensus sequence 5'-GCTGTGTG-[N20]-CCTCTCTG-3', consisting of two anchor regions connected by a linker region; the linker region probably does not contribute to the binding specificity. Required for cell homeostasis. May be involved in transcriptional regulation. This is Zinc finger protein 768 (Znf768) from Mus musculus (Mouse).